Reading from the N-terminus, the 241-residue chain is Uridylate kinase (241 aa).

Residue 9–10 (GS) participates in ATP binding. G44 contributes to the UMP binding site. G45 and R49 together coordinate ATP. Residues D66 and 114–120 (VTPGQTT) contribute to the UMP site. Residues T140, Y146, and D149 each coordinate ATP. The tract at residues 222–241 (TDVIPTGSEEPIYWTGSSDA) is disordered.

The protein belongs to the UMP kinase family. Homohexamer.

It localises to the cytoplasm. It catalyses the reaction UMP + ATP = UDP + ADP. It functions in the pathway pyrimidine metabolism; CTP biosynthesis via de novo pathway; UDP from UMP (UMPK route): step 1/1. With respect to regulation, inhibited by UTP. Its function is as follows. Catalyzes the reversible phosphorylation of UMP to UDP. This Halorubrum lacusprofundi (strain ATCC 49239 / DSM 5036 / JCM 8891 / ACAM 34) protein is Uridylate kinase.